The chain runs to 467 residues: 3-isopropylmalate dehydratase large subunit (467 aa).

Residues C349, C409, and C412 each coordinate [4Fe-4S] cluster.

Belongs to the aconitase/IPM isomerase family. LeuC type 1 subfamily. As to quaternary structure, heterodimer of LeuC and LeuD. [4Fe-4S] cluster is required as a cofactor.

It carries out the reaction (2R,3S)-3-isopropylmalate = (2S)-2-isopropylmalate. It participates in amino-acid biosynthesis; L-leucine biosynthesis; L-leucine from 3-methyl-2-oxobutanoate: step 2/4. Functionally, catalyzes the isomerization between 2-isopropylmalate and 3-isopropylmalate, via the formation of 2-isopropylmaleate. The sequence is that of 3-isopropylmalate dehydratase large subunit from Ruegeria sp. (strain TM1040) (Silicibacter sp.).